The chain runs to 307 residues: Ribonuclease Z (307 aa).

Zn(2+) contacts are provided by H63, H65, D67, H68, H143, D213, and H271. D67 serves as the catalytic Proton acceptor.

This sequence belongs to the RNase Z family. In terms of assembly, homodimer. It depends on Zn(2+) as a cofactor.

It carries out the reaction Endonucleolytic cleavage of RNA, removing extra 3' nucleotides from tRNA precursor, generating 3' termini of tRNAs. A 3'-hydroxy group is left at the tRNA terminus and a 5'-phosphoryl group is left at the trailer molecule.. Functionally, zinc phosphodiesterase, which displays some tRNA 3'-processing endonuclease activity. Probably involved in tRNA maturation, by removing a 3'-trailer from precursor tRNA. The sequence is that of Ribonuclease Z from Lactococcus lactis subsp. lactis (strain IL1403) (Streptococcus lactis).